A 583-amino-acid polypeptide reads, in one-letter code: Phosphoglucomutase, cytoplasmic 2 (583 aa).

Positions 25 and 124 each coordinate alpha-D-glucose 1,6-bisphosphate. S124 (phosphoserine intermediate) is an active-site residue. Mg(2+) contacts are provided by S124, D300, D302, and D304. A Phosphoserine modification is found at S124. Residues D304, R305, T368, E387, S389, and K400 each coordinate alpha-D-glucose 1,6-bisphosphate.

The protein belongs to the phosphohexose mutase family. As to quaternary structure, monomer. The cofactor is Mg(2+).

It localises to the cytoplasm. It catalyses the reaction alpha-D-glucose 1-phosphate = alpha-D-glucose 6-phosphate. The catalysed reaction is O-phospho-L-seryl-[protein] + alpha-D-glucose 1-phosphate = alpha-D-glucose 1,6-bisphosphate + L-seryl-[protein]. It carries out the reaction alpha-D-glucose 1,6-bisphosphate + L-seryl-[protein] = O-phospho-L-seryl-[protein] + alpha-D-glucose 6-phosphate. Its function is as follows. Catalyzes the reversible isomerization of alpha-D-glucose 1-phosphate to alpha-D-glucose 6-phosphate. The mechanism proceeds via the intermediate compound alpha-D-glucose 1,6-bisphosphate. This enzyme participates in both the breakdown and synthesis of glucose. This chain is Phosphoglucomutase, cytoplasmic 2, found in Zea mays (Maize).